The chain runs to 397 residues: Acetate kinase (397 aa).

Residue N7 coordinates Mg(2+). Residue K14 participates in ATP binding. Residue R91 participates in substrate binding. D148 (proton donor/acceptor) is an active-site residue. ATP-binding positions include 208–212, 283–285, and 331–335; these read HLGNG, DLR, and GVGEN. E384 provides a ligand contact to Mg(2+).

Belongs to the acetokinase family. As to quaternary structure, homodimer. It depends on Mg(2+) as a cofactor. The cofactor is Mn(2+).

Its subcellular location is the cytoplasm. The enzyme catalyses acetate + ATP = acetyl phosphate + ADP. The protein operates within metabolic intermediate biosynthesis; acetyl-CoA biosynthesis; acetyl-CoA from acetate: step 1/2. In terms of biological role, catalyzes the formation of acetyl phosphate from acetate and ATP. Can also catalyze the reverse reaction. The protein is Acetate kinase of Syntrophomonas wolfei subsp. wolfei (strain DSM 2245B / Goettingen).